A 90-amino-acid polypeptide reads, in one-letter code: Histone H1.M6.2 (90 aa).

Residues 1–90 (MSDAAVPPKK…KAVKKAPKKK (90 aa)) form a disordered region. The span at 11–90 (ASPKKAAAKK…KAVKKAPKKK (80 aa)) shows a compositional bias: basic residues.

Its subcellular location is the nucleus. It is found in the chromosome. The protein is Histone H1.M6.2 of Trypanosoma cruzi.